The sequence spans 446 residues: Mitochondrial distribution and morphology protein 12 (446 aa).

Residues 1–446 (MSIDINWEAA…VYPSFWTFLV (446 aa)) enclose the SMP-LTD domain. Positions 75-85 (DNEIGDGEVSD) are enriched in acidic residues. Disordered stretches follow at residues 75-106 (DNEIGDGEVSDIQDRSPKPRPSSAGNERSAAD), 126-145 (PHDVPIPSKEDPLASRPIRS), and 188-283 (TPLS…RVRE). Residues 126–138 (PHDVPIPSKEDPL) are compositionally biased toward basic and acidic residues. A compositionally biased stretch (polar residues) spans 233 to 246 (TGNSRPSTADTLDS). A compositionally biased stretch (basic and acidic residues) spans 260-274 (SSDDAHPNVLPRRDN).

Belongs to the MDM12 family. Component of the ER-mitochondria encounter structure (ERMES) or MDM complex, composed of MMM1, MDM10, MDM12 and MDM34. An MMM1 homodimer associates with one molecule of MDM12 on each side in a pairwise head-to-tail manner, and the SMP-LTD domains of MMM1 and MDM12 generate a continuous hydrophobic tunnel for phospholipid trafficking.

The protein localises to the mitochondrion outer membrane. Its subcellular location is the endoplasmic reticulum membrane. Its function is as follows. Component of the ERMES/MDM complex, which serves as a molecular tether to connect the endoplasmic reticulum (ER) and mitochondria. Components of this complex are involved in the control of mitochondrial shape and protein biogenesis, and function in nonvesicular lipid trafficking between the ER and mitochondria. MDM12 is required for the interaction of the ER-resident membrane protein MMM1 and the outer mitochondrial membrane-resident beta-barrel protein MDM10. The MDM12-MMM1 subcomplex functions in the major beta-barrel assembly pathway that is responsible for biogenesis of all mitochondrial outer membrane beta-barrel proteins, and acts in a late step after the SAM complex. The MDM10-MDM12-MMM1 subcomplex further acts in the TOM40-specific pathway after the action of the MDM12-MMM1 complex. Essential for establishing and maintaining the structure of mitochondria and maintenance of mtDNA nucleoids. The protein is Mitochondrial distribution and morphology protein 12 of Coccidioides immitis (strain RS) (Valley fever fungus).